The following is a 256-amino-acid chain: 5'-nucleotidase SurE (256 aa).

A divalent metal cation contacts are provided by aspartate 8, aspartate 9, serine 39, and asparagine 91.

Belongs to the SurE nucleotidase family. The cofactor is a divalent metal cation.

Its subcellular location is the cytoplasm. The enzyme catalyses a ribonucleoside 5'-phosphate + H2O = a ribonucleoside + phosphate. Its function is as follows. Nucleotidase that shows phosphatase activity on nucleoside 5'-monophosphates. This chain is 5'-nucleotidase SurE, found in Marinobacter nauticus (strain ATCC 700491 / DSM 11845 / VT8) (Marinobacter aquaeolei).